The chain runs to 184 residues: Peptidyl-tRNA hydrolase (184 aa).

TRNA is bound at residue Y13. Residue H18 is the Proton acceptor of the active site. Residues F59, N61, and N105 each coordinate tRNA.

Belongs to the PTH family. As to quaternary structure, monomer.

The protein resides in the cytoplasm. It catalyses the reaction an N-acyl-L-alpha-aminoacyl-tRNA + H2O = an N-acyl-L-amino acid + a tRNA + H(+). Functionally, hydrolyzes ribosome-free peptidyl-tRNAs (with 1 or more amino acids incorporated), which drop off the ribosome during protein synthesis, or as a result of ribosome stalling. Catalyzes the release of premature peptidyl moieties from peptidyl-tRNA molecules trapped in stalled 50S ribosomal subunits, and thus maintains levels of free tRNAs and 50S ribosomes. The polypeptide is Peptidyl-tRNA hydrolase (Sulfurimonas denitrificans (strain ATCC 33889 / DSM 1251) (Thiomicrospira denitrificans (strain ATCC 33889 / DSM 1251))).